A 164-amino-acid chain; its full sequence is Large ribosomal subunit protein bL9 (164 aa).

It belongs to the bacterial ribosomal protein bL9 family.

Its function is as follows. Binds to the 23S rRNA. The polypeptide is Large ribosomal subunit protein bL9 (Borrelia duttonii (strain Ly)).